The following is a 429-amino-acid chain: Glutamate-1-semialdehyde 2,1-aminomutase 2 (429 aa).

N6-(pyridoxal phosphate)lysine is present on Lys-268.

It belongs to the class-III pyridoxal-phosphate-dependent aminotransferase family. HemL subfamily. As to quaternary structure, homodimer. Requires pyridoxal 5'-phosphate as cofactor.

It localises to the cytoplasm. It catalyses the reaction (S)-4-amino-5-oxopentanoate = 5-aminolevulinate. It functions in the pathway porphyrin-containing compound metabolism; protoporphyrin-IX biosynthesis; 5-aminolevulinate from L-glutamyl-tRNA(Glu): step 2/2. In Staphylococcus carnosus (strain TM300), this protein is Glutamate-1-semialdehyde 2,1-aminomutase 2.